The chain runs to 120 residues: Ribosome-binding factor A (120 aa).

Belongs to the RbfA family. As to quaternary structure, monomer. Binds 30S ribosomal subunits, but not 50S ribosomal subunits or 70S ribosomes.

It localises to the cytoplasm. Its function is as follows. One of several proteins that assist in the late maturation steps of the functional core of the 30S ribosomal subunit. Associates with free 30S ribosomal subunits (but not with 30S subunits that are part of 70S ribosomes or polysomes). Required for efficient processing of 16S rRNA. May interact with the 5'-terminal helix region of 16S rRNA. This chain is Ribosome-binding factor A, found in Campylobacter jejuni subsp. jejuni serotype O:6 (strain 81116 / NCTC 11828).